Here is a 453-residue protein sequence, read N- to C-terminus: Na(+)/H(+) antiporter NhaA 2 (453 aa).

12 consecutive transmembrane segments (helical) span residues 23-43, 74-94, 111-131, 139-159, 168-188, 191-211, 214-234, 235-255, 316-336, 345-365, 386-406, and 419-439; these read FLHI…AALI, LHFW…GMEI, LPMA…LSFG, GWAV…ALLG, VFLL…IAFF, GGLD…VIGL, IGVG…LGIL, LTGA…PVTA, VAFG…LSGV, WVMI…IVSV, IVLV…IANL, and LGVL…GVWS.

The protein belongs to the NhaA Na(+)/H(+) (TC 2.A.33) antiporter family.

Its subcellular location is the cell inner membrane. It carries out the reaction Na(+)(in) + 2 H(+)(out) = Na(+)(out) + 2 H(+)(in). Its function is as follows. Na(+)/H(+) antiporter that extrudes sodium in exchange for external protons. In Pseudomonas putida (strain ATCC 700007 / DSM 6899 / JCM 31910 / BCRC 17059 / LMG 24140 / F1), this protein is Na(+)/H(+) antiporter NhaA 2.